Here is a 195-residue protein sequence, read N- to C-terminus: Group XIIB secretory phospholipase A2-like protein (195 aa).

A signal peptide spans 1-19; that stretch reads MKLLCGFFLLWLGLVGNLA. Residues serine 89, tyrosine 91, leucine 93, and aspartate 116 each coordinate Ca(2+).

It belongs to the phospholipase A2 family. The cofactor is Ca(2+).

It localises to the secreted. Not known; does not seem to have catalytic activity. This is Group XIIB secretory phospholipase A2-like protein (Pla2g12b) from Mus musculus (Mouse).